A 352-amino-acid polypeptide reads, in one-letter code: C-C chemokine receptor type 5 (352 aa).

Topologically, residues 1–30 (MDYQVSSPTYDIDYYTSEPCQKINVKQIAA) are extracellular. Sulfotyrosine is present on Tyr-3. O-linked (GalNAc...) serine glycans are attached at residues Ser-6 and Ser-7. 3 positions are modified to sulfotyrosine: Tyr-10, Tyr-14, and Tyr-15. Intrachain disulfides connect Cys-20/Cys-269 and Cys-101/Cys-178. Residues 31–58 (RLLPPLYSLVFIFGFVGNILVVLILINC) traverse the membrane as a helical segment. The Cytoplasmic segment spans residues 59 to 68 (KRLKSMTDIY). A helical membrane pass occupies residues 69–89 (LLNLAISDLLFLLTIPFWAHY). Residues 90 to 102 (AAAQWDFGNTMCQ) lie on the Extracellular side of the membrane. Residues 103 to 124 (LLTGLYLIGFFSGIFFIILLTI) traverse the membrane as a helical segment. Residues 125-141 (DRYLAIVHAVFALKART) are Cytoplasmic-facing. The chain crosses the membrane as a helical span at residues 142–166 (VTFGLVTSVITWVVAVFASLPGIIF). At 167–198 (TRSQREGLHYTCSSHFPSSQYQFWKNFQTLKI) the chain is on the extracellular side. The helical transmembrane segment at 199–218 (VILGLVLPLLVMVICYSGIL) threads the bilayer. Residues 219–235 (KTLLRCRNEKKRHRAVR) are Cytoplasmic-facing. The chain crosses the membrane as a helical span at residues 236 to 260 (LIFTIMIVYFLFWAPYNIVLLLNTF). Over 261–277 (QEFFGLNNCSSSNRLDQ) the chain is Extracellular. A helical membrane pass occupies residues 278 to 301 (AMQVTETLGMTHCCINPIIYAFVG). Topologically, residues 302 to 352 (EKFRNYLLVFFQKHLAKRFCKCCSIFQQEAPERASSVYTRSTGEQETTVGL) are cytoplasmic. S-palmitoyl cysteine attachment occurs at residues Cys-321, Cys-323, and Cys-324. Phosphoserine; by BARK1 is present on residues Ser-336, Ser-337, and Ser-342.

Belongs to the G-protein coupled receptor 1 family. Interacts with PRAF2. Efficient ligand binding to CCL3/MIP-1alpha and CCL4/MIP-1beta requires sulfation, O-glycosylation and sialic acid modifications. Glycosylation on Ser-6 is required for efficient binding of CCL4. Interacts with GRK2. Interacts with ARRB1 and ARRB2. Interacts with CNIH4. Interacts with S100A4; this interaction stimulates T-lymphocyte chemotaxis. Sulfated on at least 2 of the N-terminal tyrosines. Sulfation is required for efficient binding of the chemokines, CCL3 and CCL4. Post-translationally, palmitoylation in the C-terminal is important for cell surface expression. In terms of processing, phosphorylation on serine residues in the C-terminal is stimulated by binding CC chemokines especially by APO-RANTES. O-glycosylated, but not N-glycosylated. Ser-6 appears to be the major site even if Ser-7 may be also O-glycosylated. Also sialylated glycans present which contribute to chemokine binding. Thr-16 and Ser-17 may also be glycosylated and, if so, with small moieties such as a T-antigen.

It is found in the cell membrane. Functionally, receptor for a number of inflammatory CC-chemokines including CCL3/MIP-1-alpha, CCL4/MIP-1-beta and RANTES and subsequently transduces a signal by increasing the intracellular calcium ion level. May play a role in the control of granulocytic lineage proliferation or differentiation. Participates in T-lymphocyte migration to the infection site by acting as a chemotactic receptor. The polypeptide is C-C chemokine receptor type 5 (CCR5) (Allochrocebus lhoesti (L'Hoest's monkey)).